We begin with the raw amino-acid sequence, 78 residues long: Large ribosomal subunit protein bL28 (78 aa).

Residues 1–21 (MSRVCQVTGKKPMVGNNRSHA) form a disordered region.

Belongs to the bacterial ribosomal protein bL28 family.

The sequence is that of Large ribosomal subunit protein bL28 from Shewanella woodyi (strain ATCC 51908 / MS32).